Reading from the N-terminus, the 105-residue chain is Pyrimidine/purine nucleoside phosphorylase (105 aa).

Belongs to the nucleoside phosphorylase PpnP family.

It carries out the reaction a purine D-ribonucleoside + phosphate = a purine nucleobase + alpha-D-ribose 1-phosphate. The catalysed reaction is adenosine + phosphate = alpha-D-ribose 1-phosphate + adenine. The enzyme catalyses cytidine + phosphate = cytosine + alpha-D-ribose 1-phosphate. It catalyses the reaction guanosine + phosphate = alpha-D-ribose 1-phosphate + guanine. It carries out the reaction inosine + phosphate = alpha-D-ribose 1-phosphate + hypoxanthine. The catalysed reaction is thymidine + phosphate = 2-deoxy-alpha-D-ribose 1-phosphate + thymine. The enzyme catalyses uridine + phosphate = alpha-D-ribose 1-phosphate + uracil. It catalyses the reaction xanthosine + phosphate = alpha-D-ribose 1-phosphate + xanthine. Catalyzes the phosphorolysis of diverse nucleosides, yielding D-ribose 1-phosphate and the respective free bases. Can use uridine, adenosine, guanosine, cytidine, thymidine, inosine and xanthosine as substrates. Also catalyzes the reverse reactions. The polypeptide is Pyrimidine/purine nucleoside phosphorylase (Ralstonia nicotianae (strain ATCC BAA-1114 / GMI1000) (Ralstonia solanacearum)).